Reading from the N-terminus, the 349-residue chain is Insulin gene enhancer protein isl-1 (349 aa).

LIM zinc-binding domains follow at residues 17-70 and 79-133; these read CVGC…CKRD and CAKC…RADH. Positions 181 to 240 form a DNA-binding region, homeobox; sequence TTRVRTVLNEKQLHTLRTCYNANPRPDALMKEQLVEMTGLSPRVIRVWFQNKRCKDKKRS. The tract at residues 312 to 349 is disordered; the sequence is VNFSEGGPGSNSTGSEVASMSSQLPDTPNSMVASPIEA. Residues 321 to 343 are compositionally biased toward polar residues; sequence SNSTGSEVASMSSQLPDTPNSMV.

The protein resides in the nucleus. In terms of biological role, DNA-binding transcriptional activator. Recognizes and binds to the consensus octamer binding site 5'-ATAATTAA-3' in promoter of target genes. Plays a fundamental role in the gene regulatory network essential for retinal ganglion cell (RGC) differentiation. May be involved in subtype specialization of primary motoneurons. May bind to insulin gene enhancer sequences. Essential for heart development. The protein is Insulin gene enhancer protein isl-1 (isl1) of Danio rerio (Zebrafish).